Reading from the N-terminus, the 149-residue chain is UPF0178 protein VFMJ11_0615 (149 aa).

The protein belongs to the UPF0178 family.

This is UPF0178 protein VFMJ11_0615 from Aliivibrio fischeri (strain MJ11) (Vibrio fischeri).